The chain runs to 130 residues: Abscisic acid and environmental stress-inducible protein TAS14 (130 aa).

The interval 1–130 (MAQYGNQDQM…KIKDKIPGMH (130 aa)) is disordered. Gly residues predominate over residues 27 to 58 (QGTGTGGMMGGTGTGGMMGGTGGEYGTQGMGT). Basic and acidic residues-rich tracts occupy residues 61-73 (HHHEGQQQLRRSD) and 92-130 (KEKIMEKMPGQHEGEYGQTTGEEKKGMMDKIKDKIPGMH).

This sequence belongs to the plant dehydrin family.

This Solanum lycopersicum (Tomato) protein is Abscisic acid and environmental stress-inducible protein TAS14 (TAS14).